A 430-amino-acid polypeptide reads, in one-letter code: Trigger factor (430 aa).

The PPIase FKBP-type domain occupies Gly163 to Pro248.

It belongs to the FKBP-type PPIase family. Tig subfamily.

Its subcellular location is the cytoplasm. The enzyme catalyses [protein]-peptidylproline (omega=180) = [protein]-peptidylproline (omega=0). Its function is as follows. Involved in protein export. Acts as a chaperone by maintaining the newly synthesized protein in an open conformation. Functions as a peptidyl-prolyl cis-trans isomerase. In Exiguobacterium sp. (strain ATCC BAA-1283 / AT1b), this protein is Trigger factor.